We begin with the raw amino-acid sequence, 658 residues long: DNA mismatch repair protein MutL (658 aa).

Over residues 114–130 the composition is skewed to basic and acidic residues; the sequence is RQEDSSHATQVKAEDGK. Disordered regions lie at residues 114-138 and 353-405; these read RQED…TAAA and PMPS…HSLS. The span at 361–372 shows a compositional bias: polar residues; that stretch reads ENLFDSASNHPT.

Belongs to the DNA mismatch repair MutL/HexB family.

This protein is involved in the repair of mismatches in DNA. It is required for dam-dependent methyl-directed DNA mismatch repair. May act as a 'molecular matchmaker', a protein that promotes the formation of a stable complex between two or more DNA-binding proteins in an ATP-dependent manner without itself being part of a final effector complex. This Neisseria gonorrhoeae (strain NCCP11945) protein is DNA mismatch repair protein MutL.